The sequence spans 245 residues: Sec-independent protein translocase protein TatC (245 aa).

A run of 6 helical transmembrane segments spans residues 17-37 (FISV…RSYI), 73-93 (FFAA…KFVA), 107-127 (FVSF…FVVV), 159-179 (VVVA…FAKI), 191-207 (FRIA…FMTP), and 210-230 (VLSQ…SILI).

Belongs to the TatC family. In terms of assembly, the Tat system comprises two distinct complexes: a TatABC complex, containing multiple copies of TatA, TatB and TatC subunits, and a separate TatA complex, containing only TatA subunits. Substrates initially bind to the TatABC complex, which probably triggers association of the separate TatA complex to form the active translocon.

Its subcellular location is the cell inner membrane. In terms of biological role, part of the twin-arginine translocation (Tat) system that transports large folded proteins containing a characteristic twin-arginine motif in their signal peptide across membranes. Together with TatB, TatC is part of a receptor directly interacting with Tat signal peptides. This Campylobacter jejuni subsp. jejuni serotype O:2 (strain ATCC 700819 / NCTC 11168) protein is Sec-independent protein translocase protein TatC.